A 261-amino-acid chain; its full sequence is Carnitinyl-CoA dehydratase (261 aa).

The active-site Nucleophile is glutamate 111. The active-site Proton acceptor is the glutamate 131.

This sequence belongs to the enoyl-CoA hydratase/isomerase family.

The catalysed reaction is (R)-carnitinyl-CoA = crotonobetainyl-CoA + H2O. Its pathway is amine and polyamine metabolism; carnitine metabolism. In terms of biological role, catalyzes the reversible dehydration of L-carnitinyl-CoA to crotonobetainyl-CoA. This Escherichia coli (strain ATCC 8739 / DSM 1576 / NBRC 3972 / NCIMB 8545 / WDCM 00012 / Crooks) protein is Carnitinyl-CoA dehydratase.